Consider the following 223-residue polypeptide: Probable iron-sulfur cluster repair protein HI_1677 (223 aa).

Belongs to the RIC family.

The protein localises to the cytoplasm. Functionally, di-iron-containing protein involved in the repair of iron-sulfur clusters. In Haemophilus influenzae (strain ATCC 51907 / DSM 11121 / KW20 / Rd), this protein is Probable iron-sulfur cluster repair protein HI_1677.